Here is a 977-residue protein sequence, read N- to C-terminus: uncharacterized protein (977 aa).

Positions 1–24 (MQSNLLKVLGVLAIVATLVCFIFA) are cleaved as a signal peptide. Positions 125 to 146 (TESTRPGKSNLDDKGNMIPIPR) are disordered. The next 6 membrane-spanning stretches (helical) occupy residues 612-632 (IKAI…LGFA), 722-742 (LGLS…IVII), 754-774 (AFMA…FLLF), 796-816 (VVMM…LDFV), 833-853 (FIGT…INWF), and 866-886 (GVNM…YGYV). The interval 918 to 977 (KALSPIGMDDKTRQGITGRAEARLKQRNKTLDQAEKNRKNTPKEGGEKTNAEPPQPEARG) is disordered. Positions 937–967 (AEARLKQRNKTLDQAEKNRKNTPKEGGEKTN) are enriched in basic and acidic residues.

It belongs to the TrbL/VirB6 family.

It is found in the cell membrane. This is an uncharacterized protein from Rickettsia felis (strain ATCC VR-1525 / URRWXCal2) (Rickettsia azadi).